Reading from the N-terminus, the 304-residue chain is Killer cell immunoglobulin-like receptor 2DS1 (304 aa).

Positions M1–P21 are cleaved as a signal peptide. Over H22–H245 the chain is Extracellular. Ig-like C2-type domains are found at residues E42–S107 and G142–S205. A disulfide bond links C49 and C100. N-linked (GlcNAc...) asparagine glycosylation is found at N67, N84, N144, and N178. The cysteines at positions 149 and 198 are disulfide-linked. The disordered stretch occupies residues V220–G239. Low complexity predominate over residues N223 to G239. Residues V246–L264 traverse the membrane as a helical segment. Over L265–A304 the chain is Cytoplasmic. Positions Q280–A304 are disordered.

The protein belongs to the immunoglobulin superfamily. Interacts with the adapter protein TYROBP/DAP12; the interaction enhances KIR2DS1 stability at the cell surface. As to expression, expressed by NK cells.

It localises to the cell membrane. Functionally, receptor on natural killer (NK) cells for some HLA-C alleles such as w6. Does not inhibit the activity of NK cells. This is Killer cell immunoglobulin-like receptor 2DS1 from Homo sapiens (Human).